The primary structure comprises 556 residues: Oxygen-dependent choline dehydrogenase (556 aa).

FAD is bound at residue 4 to 33 (DYIIIGAGSAGNVLATRLTEDPNTTVLLLE). The Proton acceptor role is filled by histidine 473.

This sequence belongs to the GMC oxidoreductase family. FAD is required as a cofactor.

The enzyme catalyses choline + A = betaine aldehyde + AH2. It catalyses the reaction betaine aldehyde + NAD(+) + H2O = glycine betaine + NADH + 2 H(+). The protein operates within amine and polyamine biosynthesis; betaine biosynthesis via choline pathway; betaine aldehyde from choline (cytochrome c reductase route): step 1/1. Functionally, involved in the biosynthesis of the osmoprotectant glycine betaine. Catalyzes the oxidation of choline to betaine aldehyde and betaine aldehyde to glycine betaine at the same rate. The chain is Oxygen-dependent choline dehydrogenase from Escherichia coli O127:H6 (strain E2348/69 / EPEC).